The primary structure comprises 384 residues: 4-hydroxy-3-methylbut-2-en-1-yl diphosphate synthase (flavodoxin) 1 (384 aa).

The [4Fe-4S] cluster site is built by Cys-281, Cys-284, Cys-316, and Glu-323.

Belongs to the IspG family. It depends on [4Fe-4S] cluster as a cofactor.

The catalysed reaction is (2E)-4-hydroxy-3-methylbut-2-enyl diphosphate + oxidized [flavodoxin] + H2O + 2 H(+) = 2-C-methyl-D-erythritol 2,4-cyclic diphosphate + reduced [flavodoxin]. Its pathway is isoprenoid biosynthesis; isopentenyl diphosphate biosynthesis via DXP pathway; isopentenyl diphosphate from 1-deoxy-D-xylulose 5-phosphate: step 5/6. In terms of biological role, converts 2C-methyl-D-erythritol 2,4-cyclodiphosphate (ME-2,4cPP) into 1-hydroxy-2-methyl-2-(E)-butenyl 4-diphosphate. In Streptomyces coelicolor (strain ATCC BAA-471 / A3(2) / M145), this protein is 4-hydroxy-3-methylbut-2-en-1-yl diphosphate synthase (flavodoxin) 1.